The chain runs to 122 residues: U1 small nuclear ribonucleoprotein C (122 aa).

Residues 4 to 36 (YFCDYCDTYLTHDSPSVRKTHCSGRKHKDNVKM) form a Matrin-type zinc finger.

It belongs to the U1 small nuclear ribonucleoprotein C family. U1 snRNP is composed of the 7 core Sm proteins B/B', D1, D2, D3, E, F and G that assemble in a heptameric protein ring on the Sm site of the small nuclear RNA to form the core snRNP, and at least 3 U1 snRNP-specific proteins U1-70K, U1-A and U1-C. U1-C interacts with U1 snRNA and the 5' splice-site region of the pre-mRNA.

The protein resides in the nucleus. Its function is as follows. Component of the spliceosomal U1 snRNP, which is essential for recognition of the pre-mRNA 5' splice-site and the subsequent assembly of the spliceosome. U1-C is directly involved in initial 5' splice-site recognition for both constitutive and regulated alternative splicing. The interaction with the 5' splice-site seems to precede base-pairing between the pre-mRNA and the U1 snRNA. Stimulates commitment or early (E) complex formation by stabilizing the base pairing of the 5' end of the U1 snRNA and the 5' splice-site region. The protein is U1 small nuclear ribonucleoprotein C of Ciona intestinalis (Transparent sea squirt).